The following is a 451-amino-acid chain: MENSLWKQCLRRLEQEIPDQQLNTWIRPLQAQEEEDRLRLLAPNRFVLDWVKAHFADRITELLSAQRPDRPPRLELQIGSSAVVAPPRRRQVSVTTPSPSAAADQTPATRSAASNLNSNFTFDTFVEGKSNQLARAASMQVVENPGTAYNPLFLYGGVGLGKTHLMHAVGNAMLRRRPEARVLYLHSERFVADMVKALQHNAINEFKRHYRMVDALLIDDIQFFARKERSQEEFFHTFNALLEGEQQVIMTCDRYPKEVNGLEERLKSRFGWGLTVAIEPPELETRVAILMSKALQEGVDLPHEVAFFIAKRIRSNIRELEGALRRVVANAQFTGQEITVEFTKEALRDLLALQDKLVTIDNIQKTVAEYYKIRVADLLSKRRSRSITRPRQMAMALAKELTSHSLPEIGDAFGGRDHTTVLHACRKVESLCAEDSRIEEDYSNLLRTLST.

The interval 1 to 82 is domain I, interacts with DnaA modulators; sequence MENSLWKQCL…RLELQIGSSA (82 aa). The tract at residues 82–114 is domain II; that stretch reads AVVAPPRRRQVSVTTPSPSAAADQTPATRSAAS. Residues 85-112 are disordered; that stretch reads APPRRRQVSVTTPSPSAAADQTPATRSA. The segment at 115–331 is domain III, AAA+ region; the sequence is NLNSNFTFDT…GALRRVVANA (217 aa). Positions 159, 161, 162, and 163 each coordinate ATP. The tract at residues 332 to 451 is domain IV, binds dsDNA; that stretch reads QFTGQEITVE…YSNLLRTLST (120 aa).

Belongs to the DnaA family. As to quaternary structure, oligomerizes as a right-handed, spiral filament on DNA at oriC.

The protein localises to the cytoplasm. Plays an essential role in the initiation and regulation of chromosomal replication. ATP-DnaA binds to the origin of replication (oriC) to initiate formation of the DNA replication initiation complex once per cell cycle. Binds the DnaA box (a 9 base pair repeat at the origin) and separates the double-stranded (ds)DNA. Forms a right-handed helical filament on oriC DNA; dsDNA binds to the exterior of the filament while single-stranded (ss)DNA is stabiized in the filament's interior. The ATP-DnaA-oriC complex binds and stabilizes one strand of the AT-rich DNA unwinding element (DUE), permitting loading of DNA polymerase. After initiation quickly degrades to an ADP-DnaA complex that is not apt for DNA replication. Binds acidic phospholipids. This is Chromosomal replication initiator protein DnaA from Alkalilimnicola ehrlichii (strain ATCC BAA-1101 / DSM 17681 / MLHE-1).